Consider the following 417-residue polypeptide: MIDLKFLRENPDAVRASQRSRGEDPALVDALLDADAARRAAVSAADNLRAEQKAASKKVGKASPEERPALLTRAKELAEQVKAAEAAQADADRTFTAAHMAISNVVIEGVPAGGEDCFAVLDVVGEPRAIDDPKDHLELGEALGLIDMERGAKVAGSRFYFLTGRGALLQLGLMQLAVRLATDNGFTLVIPPVLVRPEVMAGTGFLGAHADEVYRLESDDMYLVGTSEVPLAGYHADEIIDLSAGPRRYAGWSSCFRREAGSYGKDTRGIIRVHQFDKVEGFIYCKPEDAAAEHDRLLGWQREMLALIEVPYRVIDVAAGDLGSSAARKYDCEAWVPTQQTYRELTSTSNCTTFQARRLSTRYRDENGKPQIAATLNGTLATTRWLVAILENHQQPDGSVRVPAALVPFVGTEVLEP.

An L-serine-binding site is contributed by 226–228; it reads TSE. Residues 257–259 and V273 contribute to the ATP site; that span reads RRE. E280 is a binding site for L-serine. 344-347 is an ATP binding site; it reads ELTS. T379 contacts L-serine.

It belongs to the class-II aminoacyl-tRNA synthetase family. Type-1 seryl-tRNA synthetase subfamily. In terms of assembly, homodimer. The tRNA molecule binds across the dimer.

The protein resides in the cytoplasm. The enzyme catalyses tRNA(Ser) + L-serine + ATP = L-seryl-tRNA(Ser) + AMP + diphosphate + H(+). It carries out the reaction tRNA(Sec) + L-serine + ATP = L-seryl-tRNA(Sec) + AMP + diphosphate + H(+). The protein operates within aminoacyl-tRNA biosynthesis; selenocysteinyl-tRNA(Sec) biosynthesis; L-seryl-tRNA(Sec) from L-serine and tRNA(Sec): step 1/1. Its function is as follows. Catalyzes the attachment of serine to tRNA(Ser). Is also able to aminoacylate tRNA(Sec) with serine, to form the misacylated tRNA L-seryl-tRNA(Sec), which will be further converted into selenocysteinyl-tRNA(Sec). The sequence is that of Serine--tRNA ligase from Mycobacterium sp. (strain JLS).